Here is a 189-residue protein sequence, read N- to C-terminus: UPF0301 protein RPR_01165 (189 aa).

Belongs to the UPF0301 (AlgH) family.

In Rickettsia peacockii (strain Rustic), this protein is UPF0301 protein RPR_01165.